The chain runs to 190 residues: Glutathione peroxidase 2 (190 aa).

Residue Sec-40 is part of the active site. Residue Sec-40 is a non-standard amino acid, selenocysteine.

This sequence belongs to the glutathione peroxidase family. Homotetramer.

Its subcellular location is the cytoplasm. It localises to the cytosol. The catalysed reaction is 2 glutathione + H2O2 = glutathione disulfide + 2 H2O. It carries out the reaction a hydroperoxy polyunsaturated fatty acid + 2 glutathione = a hydroxy polyunsaturated fatty acid + glutathione disulfide + H2O. The enzyme catalyses tert-butyl hydroperoxide + 2 glutathione = tert-butanol + glutathione disulfide + H2O. It catalyses the reaction cumene hydroperoxide + 2 glutathione = 2-phenylpropan-2-ol + glutathione disulfide + H2O. The catalysed reaction is (13S)-hydroperoxy-(9Z,11E)-octadecadienoate + 2 glutathione = (13S)-hydroxy-(9Z,11E)-octadecadienoate + glutathione disulfide + H2O. It carries out the reaction (5S)-hydroperoxy-(6E,8Z,11Z,14Z)-eicosatetraenoate + 2 glutathione = (5S)-hydroxy-(6E,8Z,11Z,14Z)-eicosatetraenoate + glutathione disulfide + H2O. The enzyme catalyses (12R)-hydroperoxy-(5Z,8Z,10E,14Z)-eicosatetraenoate + 2 glutathione = (12R)-hydroxy-(5Z,8Z,10E,14Z)-eicosatetraenoate + glutathione disulfide + H2O. It catalyses the reaction (15S)-hydroperoxy-(5Z,8Z,11Z,13E)-eicosatetraenoate + 2 glutathione = (15S)-hydroxy-(5Z,8Z,11Z,13E)-eicosatetraenoate + glutathione disulfide + H2O. Functionally, catalyzes the reduction of hydroperoxides in a glutathione-dependent manner thus regulating cellular redox homeostasis. Can reduce small soluble hydroperoxides such as H2O2, cumene hydroperoxide and tert-butyl hydroperoxide, as well as several fatty acid-derived hydroperoxides. Cannot reduce phosphatidycholine hydroperoxide. This is Glutathione peroxidase 2 (GPX2) from Callithrix jacchus (White-tufted-ear marmoset).